The following is a 424-amino-acid chain: Appressorium protein ROW1 (424 aa).

The signal sequence occupies residues 1–21 (MTKLTLTVALVSALLASGASA). Disordered regions lie at residues 19-54 (ASAQQPTGTGNGPDPRATTDLNRNQPTKSWTQWQPK), 69-90 (ANRIESGEGGQPGGEPQSGYNT), 278-304 (SGSTFRQGDPVTPPAHPAPSSSQCSSV), and 327-398 (SSSA…TQGA). Residues 22–403 (QQPTGTGNGP…NTQGAASSAS (382 aa)) are Extracellular-facing. The span at 37-54 (TDLNRNQPTKSWTQWQPK) shows a compositional bias: polar residues. 2 stretches are compositionally biased toward low complexity: residues 295-304 (APSSSQCSSV) and 327-347 (SSSAASSAATDSSASTNSASS). The span at 362–382 (SGTGSGSGSGSGSGSGSGSGS) shows a compositional bias: gly residues. The segment covering 383-398 (SSGSSSSGSSSNTQGA) has biased composition (low complexity). A helical membrane pass occupies residues 404 to 424 (SLTISVGLAGLVAIGAAAFAL).

It is found in the cell membrane. The protein resides in the secreted. Plays a role in the formation of the appressorium, a specialized infection structure with the purpose of penetrating the host surface, and is required for proper remodeling of the appressorium wall and vesicle secretion. The protein is Appressorium protein ROW1 of Mycosarcoma maydis (Corn smut fungus).